The sequence spans 230 residues: Protein CbbY (230 aa).

Catalysis depends on aspartate 8, which acts as the Nucleophile. Residues aspartate 8 and aspartate 10 each coordinate Mg(2+). Aspartate 8 serves as a coordination point for substrate. Residue aspartate 10 is the Proton donor of the active site. Substrate-binding positions include glutamate 17, 50 to 54 (GGKER), 75 to 78 (HRAK), and 115 to 121 (TTTSLPN). A Mg(2+)-binding site is contributed by aspartate 176.

This sequence belongs to the HAD-like hydrolase superfamily. CbbY/CbbZ/Gph/YieH family. Requires Mg(2+) as cofactor.

The catalysed reaction is D-xylulose 1,5-bisphosphate + H2O = D-xylulose 5-phosphate + phosphate. Highly selective xylulose-1,5-bisphosphate (XuBP) phosphatase. Also shows activity towards ribulose-1,5-bisphosphate (RuBP) and fructose-1,6-bisphosphate (FBP), but not towards fructose-6-phosphate (F6P) or ribulose-5-phosphate (Ru5P). Degrades xylulose-1,5-bisphosphate, a potent inhibitor of rubisco produced by the rubisco itself. The protein is Protein CbbY of Cereibacter sphaeroides (Rhodobacter sphaeroides).